The following is a 96-amino-acid chain: (4S)-4-hydroxy-5-phosphonooxypentane-2,3-dione isomerase (96 aa).

The region spanning 2 to 91 is the ABM domain; that stretch reads HVTLVEINVH…MTGPRTKKVF (90 aa).

Belongs to the LsrG family. As to quaternary structure, homodimer.

The protein localises to the cytoplasm. The catalysed reaction is (2S)-2-hydroxy-3,4-dioxopentyl phosphate = 3-hydroxy-2,4-dioxopentyl phosphate. Involved in the degradation of phospho-AI-2, thereby terminating induction of the lsr operon and closing the AI-2 signaling cycle. Catalyzes the conversion of (4S)-4-hydroxy-5-phosphonooxypentane-2,3-dione (P-DPD) to 3-hydroxy-5-phosphonooxypentane-2,4-dione (P-HPD). The protein is (4S)-4-hydroxy-5-phosphonooxypentane-2,3-dione isomerase of Salmonella typhimurium (strain LT2 / SGSC1412 / ATCC 700720).